The primary structure comprises 497 residues: Sestrin homolog (497 aa).

Phosphoserine is present on residues S185 and S190. Residues 226 to 241 (NANPDYDSQTAASSNG) show a composition bias toward polar residues. A disordered region spans residues 226 to 255 (NANPDYDSQTAASSNGGAPPDSANAVADGP).

The protein belongs to the sestrin family. As to quaternary structure, associates with the GATOR2 complex; the interaction is probably direct. Associates with the GATOR1 complex; the interaction is probably indirect and mediated by the GATOR2 complex. In terms of tissue distribution, highly expressed in muscle-enriched tissues (at protein level).

Its subcellular location is the nucleus. It localises to the cytoplasm. Functionally, functions as a negative feedback regulator of mTOR function. This chain is Sestrin homolog, found in Drosophila melanogaster (Fruit fly).